An 89-amino-acid polypeptide reads, in one-letter code: Small ribosomal subunit protein uS15 (89 aa).

The span at 1–21 (MAITQERKNQLINEFKTHESD) shows a compositional bias: basic and acidic residues. Residues 1–24 (MAITQERKNQLINEFKTHESDTGS) are disordered.

It belongs to the universal ribosomal protein uS15 family. In terms of assembly, part of the 30S ribosomal subunit. Forms a bridge to the 50S subunit in the 70S ribosome, contacting the 23S rRNA.

Its function is as follows. One of the primary rRNA binding proteins, it binds directly to 16S rRNA where it helps nucleate assembly of the platform of the 30S subunit by binding and bridging several RNA helices of the 16S rRNA. Functionally, forms an intersubunit bridge (bridge B4) with the 23S rRNA of the 50S subunit in the ribosome. The sequence is that of Small ribosomal subunit protein uS15 from Bacillus subtilis (strain 168).